Consider the following 124-residue polypeptide: Large ribosomal subunit protein eL22z (124 aa).

The protein belongs to the eukaryotic ribosomal protein eL22 family.

This Arabidopsis thaliana (Mouse-ear cress) protein is Large ribosomal subunit protein eL22z (RPL22B).